The primary structure comprises 149 residues: Large ribosomal subunit protein eL19 (149 aa).

Residues 55 to 69 show a composition bias toward basic and acidic residues; sequence KGISSARKKEVQEQK. Residues 55–93 form a disordered region; that stretch reads KGISSARKKEVQEQKRKGKRKGPGSRRGAKGARTPKKEK. The segment covering 70–88 has biased composition (basic residues); sequence RKGKRKGPGSRRGAKGART.

It belongs to the eukaryotic ribosomal protein eL19 family. As to quaternary structure, part of the 50S ribosomal subunit.

Binds to the 23S rRNA. The chain is Large ribosomal subunit protein eL19 from Methanococcus vannielii.